A 76-amino-acid chain; its full sequence is UPF0248 protein MmarC6_0667 (76 aa).

The protein belongs to the UPF0248 family.

This chain is UPF0248 protein MmarC6_0667, found in Methanococcus maripaludis (strain C6 / ATCC BAA-1332).